The primary structure comprises 233 residues: Protein FAM204A (233 aa).

The segment at Met-1–Gln-126 is disordered. Acidic residues predominate over residues Ser-13–Thr-24. Positions Glu-39–Thr-58 are enriched in basic and acidic residues. The segment covering Phe-97–Lys-109 has biased composition (basic residues). Residues Val-144–Glu-164 are a coiled coil.

This Homo sapiens (Human) protein is Protein FAM204A (FAM204A).